We begin with the raw amino-acid sequence, 36 residues long: DLIDVKCISSQECWIACKKVTGRFEGKCQNRQCRCY.

3 cysteine pairs are disulfide-bonded: Cys-7/Cys-28, Cys-13/Cys-33, and Cys-17/Cys-35.

This sequence belongs to the short scorpion toxin superfamily. Potassium channel inhibitor family. Alpha-KTx 16 subfamily. As to expression, expressed by the venom gland.

Its subcellular location is the secreted. Blocks calcium-activated potassium channels. This chain is Potassium channel toxin alpha-KTx 16.1, found in Hottentotta tamulus (Eastern Indian scorpion).